The following is a 313-amino-acid chain: Postacrosomal sheath WW domain-binding protein (313 aa).

One can recognise a GRAM domain in the interval 8–87 (TESRRGALIP…GLMSDCTIEQ (80 aa)). Repeat copies occupy residues 179 to 185 (YGPPPPG), 193 to 199 (YGTPPEG), 207 to 213 (YGAPPMG), 214 to 220 (YGAPPVG), 221 to 227 (YGVPPGG), 228 to 234 (YGVPPGG), 235 to 241 (YGVPPGG), 242 to 248 (YGAPPGG), 249 to 255 (YGVPPGG), 256 to 262 (YGAPPGG), 263 to 269 (YGAPPAG), and 270 to 276 (YGAPPAG). Positions 179–276 (YGPPPPGYTV…PAGYGAPPAG (98 aa)) are 12 X 7 AA tandem repeat of Y-G-X-P-P-X-G. Positions 183–186 (PPGY) match the PPxY motif 1 motif. Residues 254–264 (GGYGAPPGGYG) are compositionally biased toward gly residues. Positions 254 to 313 (GGYGAPPGGYGAPPAGYGAPPAGNEALPPAYEAPSAGNTAASHRSMTAQQETSLPTTSSS) are disordered. The segment covering 265 to 276 (APPAGYGAPPAG) has biased composition (low complexity). The PPxY motif 2 motif lies at 281 to 284 (PPAY). Over residues 289–313 (AGNTAASHRSMTAQQETSLPTTSSS) the composition is skewed to polar residues.

As to expression, expressed in testis.

May play a role in meiotic resumption and pronuclear formation, mediated by a WW domain-signaling pathway during fertilization. In Bos taurus (Bovine), this protein is Postacrosomal sheath WW domain-binding protein (WBP2NL).